We begin with the raw amino-acid sequence, 231 residues long: Large ribosomal subunit protein uL1 (231 aa).

It belongs to the universal ribosomal protein uL1 family. In terms of assembly, part of the 50S ribosomal subunit.

Its function is as follows. Binds directly to 23S rRNA. The L1 stalk is quite mobile in the ribosome, and is involved in E site tRNA release. Functionally, protein L1 is also a translational repressor protein, it controls the translation of the L11 operon by binding to its mRNA. In Polaromonas sp. (strain JS666 / ATCC BAA-500), this protein is Large ribosomal subunit protein uL1.